Here is a 407-residue protein sequence, read N- to C-terminus: ETS domain-containing protein Elk-3 (407 aa).

A DNA-binding region (ETS) is located at residues I5 to V85. K92 participates in a covalent cross-link: Glycyl lysine isopeptide (Lys-Gly) (interchain with G-Cter in SUMO2). Residue S115 is modified to Phosphoserine. K165 participates in a covalent cross-link: Glycyl lysine isopeptide (Lys-Gly) (interchain with G-Cter in SUMO2). Disordered stretches follow at residues S234 to P253 and L271 to E298. Positions P273–S277 match the CTBP-binding motif motif. S396 carries the phosphoserine modification.

The protein belongs to the ETS family. In terms of assembly, interacts with CTBP1.

Its subcellular location is the nucleus. Its function is as follows. May be a negative regulator of transcription, but can activate transcription when coexpressed with Ras, Src or Mos. Forms a ternary complex with the serum response factor and the ETS and SRF motifs of the Fos serum response element. The chain is ETS domain-containing protein Elk-3 (ELK3) from Homo sapiens (Human).